A 675-amino-acid chain; its full sequence is Glycerophosphocholine phosphodiesterase GPCPD1 (675 aa).

The 115-residue stretch at 1–115 (MTPSQVTFEI…IIIDDGQFGI (115 aa)) folds into the CBM20 domain. Residues R70 and 88-89 (HK) contribute to the substrate site. S178 and S427 each carry phosphoserine. One can recognise a GP-PDE domain in the interval 321-621 (PLDVGHRGAG…DRIYDWMPEQ (301 aa)). A Phosphotyrosine modification is found at Y611.

Belongs to the glycerophosphoryl diester phosphodiesterase family. In terms of tissue distribution, widely expressed with highest levels in skeletal muscle and heart.

It is found in the cytoplasm. Its subcellular location is the cytosol. The enzyme catalyses sn-glycerol 3-phosphocholine + H2O = sn-glycerol 3-phosphate + choline + H(+). May be involved in the negative regulation of skeletal muscle differentiation, independently of its glycerophosphocholine phosphodiesterase activity. This is Glycerophosphocholine phosphodiesterase GPCPD1 (Gpcpd1) from Mus musculus (Mouse).